A 626-amino-acid chain; its full sequence is L-amino-acid oxidase 4 (626 aa).

The first 18 residues, 1–18 (KSFFRSLVAASLVIVSYS), serve as a signal peptide directing secretion. Asn-54 carries an N-linked (GlcNAc...) asparagine glycan. FAD contacts are provided by Gly-75, Glu-94, Ala-95, Arg-102, Met-122, and Arg-123. Arg-123 is a binding site for L-glutamate. Position 123 (Arg-123) interacts with L-glutamine. Arg-123 contributes to the L-lysine binding site. L-phenylalanine is bound at residue Arg-123. Asn-164, Asn-193, and Asn-331 each carry an N-linked (GlcNAc...) asparagine glycan. Val-334 serves as a coordination point for FAD. Residue Tyr-457 participates in L-glutamate binding. Tyr-457 contacts L-glutamine. Tyr-457 contacts L-lysine. Tyr-457 lines the L-phenylalanine pocket. Glu-551 is a binding site for FAD. Ala-558 is a binding site for L-phenylalanine. Positions 559 and 560 each coordinate FAD.

The protein belongs to the flavin monoamine oxidase family. FIG1 subfamily. Homodimer. The cofactor is FAD. Post-translationally, out of the 4 glycosylated residues, Asn-54 is hypermannosylated. The presence of a hypermannosylated N-glycan on Asn-54 leads to adoption of a more active conformation in the absence of acid activation.

The protein localises to the secreted. It catalyses the reaction an L-alpha-amino acid + O2 + H2O = a 2-oxocarboxylate + H2O2 + NH4(+). The catalysed reaction is L-lysine + O2 + H2O = 6-amino-2-oxohexanoate + H2O2 + NH4(+). It carries out the reaction L-glutamate + O2 + H2O = H2O2 + 2-oxoglutarate + NH4(+). The enzyme catalyses L-arginine + O2 + H2O = 5-guanidino-2-oxopentanoate + H2O2 + NH4(+). It catalyses the reaction L-leucine + O2 + H2O = 4-methyl-2-oxopentanoate + H2O2 + NH4(+). The catalysed reaction is L-asparagine + O2 + H2O = 2-oxosuccinamate + H2O2 + NH4(+). It carries out the reaction L-histidine + O2 + H2O = 3-(imidazol-5-yl)pyruvate + H2O2 + NH4(+). The enzyme catalyses L-isoleucine + O2 + H2O = (S)-3-methyl-2-oxopentanoate + H2O2 + NH4(+). It catalyses the reaction L-methionine + O2 + H2O = 4-methylsulfanyl-2-oxobutanoate + H2O2 + NH4(+). The catalysed reaction is L-phenylalanine + O2 + H2O = 3-phenylpyruvate + H2O2 + NH4(+). It carries out the reaction L-tyrosine + O2 + H2O = 3-(4-hydroxyphenyl)pyruvate + H2O2 + NH4(+). The enzyme catalyses L-glutamine + O2 + H2O = 2-oxoglutaramate + H2O2 + NH4(+). It catalyses the reaction L-alanine + O2 + H2O = pyruvate + H2O2 + NH4(+). With respect to regulation, LAAO4 is activated by exposure to acidic pH, the detergent sodium dodecyl sulfate, or freezing. Catalyzes the oxidative deamination of L-amino acids with molecular oxygen to the corresponding alpha-keto acids and ammonia. L-glutamine shows the highest relative activity but LAAO4 has a broad substrate specificity, including L-amino acids with big aromatic, acidic and basic side chains. Methyl esters of these L-amino acids are also accepted, ethyl esters are converted but with lower activity, whereas D-Amino acids are not converted. No reaction is detected for small polar amino acids such as L-cysteine or L-aspartate, and very little for small, branched hydrophobic amino acids like L-valine. The sequence is that of L-amino-acid oxidase 4 from Hebeloma cylindrosporum.